Consider the following 525-residue polypeptide: GMP synthase [glutamine-hydrolyzing] (525 aa).

The region spanning 8-207 (KILILDFGSQ…ALDICGCAAN (200 aa)) is the Glutamine amidotransferase type-1 domain. Catalysis depends on Cys85, which acts as the Nucleophile. Residues His181 and Glu183 contribute to the active site. The 193-residue stretch at 208–400 (WKPSSIIEDA…LGLPYNMLYR (193 aa)) folds into the GMPS ATP-PPase domain. ATP is bound at residue 235-241 (SGGVDSS).

As to quaternary structure, homodimer.

It carries out the reaction XMP + L-glutamine + ATP + H2O = GMP + L-glutamate + AMP + diphosphate + 2 H(+). Its pathway is purine metabolism; GMP biosynthesis; GMP from XMP (L-Gln route): step 1/1. Its function is as follows. Catalyzes the synthesis of GMP from XMP. The polypeptide is GMP synthase [glutamine-hydrolyzing] (Shewanella sp. (strain MR-7)).